Consider the following 952-residue polypeptide: Disintegrin and metalloproteinase domain-containing protein adm-2 (952 aa).

The Extracellular portion of the chain corresponds to 1–672 (MTDTLDLKLS…NEAYRFRGIT (672 aa)). N-linked (GlcNAc...) asparagine glycosylation is found at Asn125 and Asn301. Positions 177–373 (RFVELALVAD…GIDLCLFNEP (197 aa)) constitute a Peptidase M12B domain. 3 disulfides stabilise this stretch: Cys287/Cys368, Cys330/Cys352, and Cys332/Cys337. A Zn(2+)-binding site is contributed by His312. Residue Glu313 is part of the active site. Zn(2+)-binding residues include His316 and His322. Positions 379 to 466 (DAKCGNGIVE…DCPADFFVQN (88 aa)) constitute a Disintegrin domain. N-linked (GlcNAc...) asparagine glycosylation is present at Asn406. 4 cysteine pairs are disulfide-bonded: Cys438–Cys458, Cys624–Cys634, Cys628–Cys640, and Cys642–Cys651. In terms of domain architecture, EGF-like spans 620 to 652 (VTAQCLDNCNFRGVCNNVGNCHCERGFGGIACE). A helical membrane pass occupies residues 673–693 (LSSTFLVFFCLFGIFIGGLCV). Residues 694–952 (YYRVKRKRNL…AAIFDQKLKK (259 aa)) lie on the Cytoplasmic side of the membrane. Disordered stretches follow at residues 778 to 809 (IPMV…ERAT) and 829 to 938 (SFNT…EKVD). 2 stretches are compositionally biased toward basic and acidic residues: residues 798-809 (AEKEEQNQERAT) and 849-873 (PSDD…DRLN). Positions 905–914 (QAPPPPPPAH) are enriched in pro residues. Residues 925–938 (KVSEDAAATEEKVD) show a composition bias toward basic and acidic residues.

The cofactor is Zn(2+). As to expression, expressed in hyp7 large epidermal syncytium (punctate distribution), seam cell syncytia, anterior epidermis, neurons located in the head, tail and central body, proximal oogenic cells (levels increasing in maturing oocytes) and myoepithelial cells of the spermatheca (at protein level). Not detected in mature sperm cells.

It localises to the cell membrane. The protein localises to the endosome membrane. The protein resides in the lysosome membrane. Functionally, metalloprotease that cleaves and releases a number of molecules. Negative regulator of lrp-1 protein levels, potentially by influencing its endosomal trafficking. Involved in regulating the molting process. In Caenorhabditis elegans, this protein is Disintegrin and metalloproteinase domain-containing protein adm-2.